The following is a 413-amino-acid chain: uncharacterized protein (413 aa).

Belongs to the mycobacterial PPE family.

This is an uncharacterized protein from Mycobacterium tuberculosis (strain CDC 1551 / Oshkosh).